Here is an 85-residue protein sequence, read N- to C-terminus: Phosphocarrier protein HPr (85 aa).

The region spanning 1-85 (MYEKQVEITA…HLVALMDQLH (85 aa)) is the HPr domain. Histidine 15 functions as the Pros-phosphohistidine intermediate in the catalytic mechanism.

It belongs to the HPr family.

The protein localises to the cytoplasm. In terms of biological role, general (non sugar-specific) component of the phosphoenolpyruvate-dependent sugar phosphotransferase system (sugar PTS). This major carbohydrate active-transport system catalyzes the phosphorylation of incoming sugar substrates concomitantly with their translocation across the cell membrane. The phosphoryl group from phosphoenolpyruvate (PEP) is transferred to the phosphoryl carrier protein HPr by enzyme I. Phospho-HPr then transfers it to the PTS EIIA domain. This chain is Phosphocarrier protein HPr (ptsH), found in Vibrio cholerae serotype O1 (strain ATCC 39315 / El Tor Inaba N16961).